The sequence spans 322 residues: Mas-related G-protein coupled receptor member X4 (322 aa).

The Extracellular segment spans residues 1-31; it reads MDPTVPVFGTKLTPINGREETPCYNQTLSFT. An N-linked (GlcNAc...) asparagine glycan is attached at Asn25. The chain crosses the membrane as a helical span at residues 32–52; the sequence is VLTCIISLVGLTGNAVVLWLL. Over 53-60 the chain is Cytoplasmic; that stretch reads GYRMRRNA. Residues 61 to 81 traverse the membrane as a helical segment; sequence VSIYILNLAAADFLFLSFQII. Residues 82 to 96 are Extracellular-facing; it reads RLPLRLINISHLIRK. N-linked (GlcNAc...) asparagine glycosylation is present at Asn89. The chain crosses the membrane as a helical span at residues 97–117; that stretch reads ILVSVMTFPYFTGLSMLSAIS. The Cytoplasmic portion of the chain corresponds to 118–137; it reads TERCLSVLWPIWYRCRRPTH. Residues 138-158 traverse the membrane as a helical segment; the sequence is LSAVVCVLLWGLSLLFSMLEW. The Extracellular segment spans residues 159-177; it reads RFCDFLFSGADSSWCETSD. A helical membrane pass occupies residues 178 to 198; sequence FIPVAWLIFLCVVLCVSSLVL. The Cytoplasmic portion of the chain corresponds to 199–218; that stretch reads LVRILCGSRKMPLTRLYVTI. Residues 219–239 traverse the membrane as a helical segment; that stretch reads LLTVLVFLLCGLPFGILGALI. Residues 240-254 are Extracellular-facing; that stretch reads YRMHLNLEVLYCHVY. Residues 255 to 275 traverse the membrane as a helical segment; sequence LVCMSLSSLNSSANPIIYFFV. Residues 276–322 lie on the Cytoplasmic side of the membrane; the sequence is GSFRQRQNRQNLKLVLQRALQDKPEVDKGEGQLPEESLELSGSRLGP. Residues 299-322 form a disordered region; sequence PEVDKGEGQLPEESLELSGSRLGP.

Belongs to the G-protein coupled receptor 1 family. Mas subfamily. Uniquely localized in a subset of small dorsal root and trigeminal sensory neurons.

The protein resides in the cell membrane. Functionally, orphan receptor. Probably involved in the function of nociceptive neurons. May regulate nociceptor function and/or development, including the sensation or modulation of pain. Potently activated by enkephalins. The chain is Mas-related G-protein coupled receptor member X4 (MRGPRX4) from Homo sapiens (Human).